A 201-amino-acid chain; its full sequence is Recombination protein RecR (201 aa).

Residues 57-72 form a C4-type zinc finger; that stretch reads CADCRTFTEQEVCNIC. Residues 81–176 form the Toprim domain; sequence GQICVVESPA…EASRIAHGVP (96 aa).

It belongs to the RecR family.

Its function is as follows. May play a role in DNA repair. It seems to be involved in an RecBC-independent recombinational process of DNA repair. It may act with RecF and RecO. This Escherichia coli O17:K52:H18 (strain UMN026 / ExPEC) protein is Recombination protein RecR.